The sequence spans 592 residues: Insulin-like growth factor 2 mRNA-binding protein 2 (592 aa).

RRM domains follow at residues N3–S76 and R82–D157. A Phosphoserine modification is found at S11. Positions D157–A182 are disordered. S162 and S164 each carry phosphoserine. 4 consecutive KH domains span residues D186–I251, E267–I334, Q420–I485, and K502–I568. Position 543 is a phosphothreonine (T543).

This sequence belongs to the RRM IMP/VICKZ family. Can form homooligomers and heterooligomers with IGF2BP1 and IGF2BP3 in an RNA-dependent manner. Interacts with HNRPD. Interacts with IGF2BP1. Interacts with ELAVL1, DHX9, HNRNPU, MATR3 and PABPC1. Expressed in oocytes, granulosa cells of small and growing follicles and Leydig cells of the testis (at protein level). Expressed in testis and ovary.

It localises to the nucleus. It is found in the cytoplasm. The protein resides in the P-body. The protein localises to the stress granule. Functionally, RNA-binding factor that recruits target transcripts to cytoplasmic protein-RNA complexes (mRNPs). This transcript 'caging' into mRNPs allows mRNA transport and transient storage. It also modulates the rate and location at which target transcripts encounter the translational apparatus and shields them from endonuclease attacks or microRNA-mediated degradation. Preferentially binds to N6-methyladenosine (m6A)-containing mRNAs and increases their stability. Binds to the 5'-UTR of the insulin-like growth factor 2 (IGF2) mRNAs. Binding is isoform-specific. Binds to beta-actin/ACTB and MYC transcripts. Increases MYC mRNA stability by binding to the coding region instability determinant (CRD) and binding is enhanced by m6A-modification of the CRD. This is Insulin-like growth factor 2 mRNA-binding protein 2 (Igf2bp2) from Mus musculus (Mouse).